The primary structure comprises 162 residues: Putative ankyrin repeat protein RBE_0151 (162 aa).

ANK repeat units lie at residues 49–77, 81–110, and 114–145; these read EKWT…NINI, KGRT…VVAP, and YGWS…EHDK.

The polypeptide is Putative ankyrin repeat protein RBE_0151 (Rickettsia bellii (strain RML369-C)).